Reading from the N-terminus, the 421-residue chain is Cell division protein FtsZ (421 aa).

GTP contacts are provided by residues 26 to 30, 132 to 134, glutamate 163, arginine 167, and asparagine 211; these read GGGGN and GTG.

This sequence belongs to the FtsZ family. As to quaternary structure, homodimer. Polymerizes to form a dynamic ring structure in a strictly GTP-dependent manner. Interacts directly with several other division proteins.

The protein localises to the cytoplasm. Functionally, essential cell division protein that forms a contractile ring structure (Z ring) at the future cell division site. The regulation of the ring assembly controls the timing and the location of cell division. One of the functions of the FtsZ ring is to recruit other cell division proteins to the septum to produce a new cell wall between the dividing cells. Binds GTP and shows GTPase activity. This Haemophilus influenzae (strain ATCC 51907 / DSM 11121 / KW20 / Rd) protein is Cell division protein FtsZ.